The chain runs to 476 residues: MTALDIIIMAAGKGTRMKSRIPKVLQRLAGRPLLHHVLGQAASLQARRVVVVTGHGATEVEAACAGSAGVGGTFDLKFVRQEPQLGTGHAVQQATPALAGDGTVVVLSGDVPLTQAATLRALVEAGAGERLALLTVRLPDPTGYGRIVRGEGGTVQRIVEHKDANDAERAIDEVYSGIMAVPAQRLAGWLARLTNDNAQGEYYLTDIVSMAVADGVPVAAHCIGDALQVAGVNSPAQLADLERAHQRAQAAALMEQGVRLADPARFDLRDDARSGARGEILCAQDVEIDVGCIFTGRVELGEGARIGAYCHISNATIAAGAVVHPFTHIDGEKTGAHVGEGALIGPFARLRPGAQLGREVHIGNFVEVKNSTLADGAKANHLAYLGDASVGERVNYGAGSITANYDGANKHRTVIEADVHIGSNCVLVAPVTIGAGGTVGGGSTITKDTPPGGLSVARGRQVSIANWKRPAKQAKG.

Residues 1–235 (MTALDIIIMA…ALQVAGVNSP (235 aa)) form a pyrophosphorylase region. UDP-N-acetyl-alpha-D-glucosamine is bound by residues Lys-23, Gln-81, 86-87 (GT), 108-110 (SGD), Gly-145, Glu-160, and Asn-233. A Mg(2+)-binding site is contributed by Asp-110. Mg(2+) is bound at residue Asn-233. The linker stretch occupies residues 236-256 (AQLADLERAHQRAQAAALMEQ). Residues 257–476 (GVRLADPARF…WKRPAKQAKG (220 aa)) form an N-acetyltransferase region. 2 residues coordinate UDP-N-acetyl-alpha-D-glucosamine: Arg-351 and Lys-369. His-381 (proton acceptor) is an active-site residue. Positions 384 and 395 each coordinate UDP-N-acetyl-alpha-D-glucosamine. Residues Ala-398, 404 to 405 (NY), Ser-423, Gly-441, and Arg-458 each bind acetyl-CoA.

This sequence in the N-terminal section; belongs to the N-acetylglucosamine-1-phosphate uridyltransferase family. The protein in the C-terminal section; belongs to the transferase hexapeptide repeat family. As to quaternary structure, homotrimer. It depends on Mg(2+) as a cofactor.

Its subcellular location is the cytoplasm. It catalyses the reaction alpha-D-glucosamine 1-phosphate + acetyl-CoA = N-acetyl-alpha-D-glucosamine 1-phosphate + CoA + H(+). It carries out the reaction N-acetyl-alpha-D-glucosamine 1-phosphate + UTP + H(+) = UDP-N-acetyl-alpha-D-glucosamine + diphosphate. It functions in the pathway nucleotide-sugar biosynthesis; UDP-N-acetyl-alpha-D-glucosamine biosynthesis; N-acetyl-alpha-D-glucosamine 1-phosphate from alpha-D-glucosamine 6-phosphate (route II): step 2/2. Its pathway is nucleotide-sugar biosynthesis; UDP-N-acetyl-alpha-D-glucosamine biosynthesis; UDP-N-acetyl-alpha-D-glucosamine from N-acetyl-alpha-D-glucosamine 1-phosphate: step 1/1. The protein operates within bacterial outer membrane biogenesis; LPS lipid A biosynthesis. Its function is as follows. Catalyzes the last two sequential reactions in the de novo biosynthetic pathway for UDP-N-acetylglucosamine (UDP-GlcNAc). The C-terminal domain catalyzes the transfer of acetyl group from acetyl coenzyme A to glucosamine-1-phosphate (GlcN-1-P) to produce N-acetylglucosamine-1-phosphate (GlcNAc-1-P), which is converted into UDP-GlcNAc by the transfer of uridine 5-monophosphate (from uridine 5-triphosphate), a reaction catalyzed by the N-terminal domain. The sequence is that of Bifunctional protein GlmU from Acidovorax sp. (strain JS42).